Consider the following 500-residue polypeptide: NAD(P)H-quinone oxidoreductase chain 4, chloroplastic (500 aa).

The next 14 helical transmembrane spans lie at 4–24 (FPWL…IFFL), 37–57 (ISIC…HFQL), 87–107 (LGSI…AWPI), 113–130 (LFYF…GLFS), 134–154 (LLLF…LLSM), 167–187 (FILY…GMGL), 211–231 (ILLY…IPLH), 242–262 (HYST…YGLI), 272–292 (AHYL…IYAA), 313–333 (MGFI…GAIL), 334–354 (QILS…TASD), 386–406 (LALP…GLIT), 417–437 (LITF…LSML), and 462–482 (LFIL…PDFV).

This sequence belongs to the complex I subunit 4 family.

Its subcellular location is the plastid. The protein resides in the chloroplast thylakoid membrane. It carries out the reaction a plastoquinone + NADH + (n+1) H(+)(in) = a plastoquinol + NAD(+) + n H(+)(out). The enzyme catalyses a plastoquinone + NADPH + (n+1) H(+)(in) = a plastoquinol + NADP(+) + n H(+)(out). The polypeptide is NAD(P)H-quinone oxidoreductase chain 4, chloroplastic (ndhD) (Triticum aestivum (Wheat)).